The chain runs to 104 residues: Protein S100-A14 (104 aa).

One can recognise an EF-hand domain in the interval 27–61 (KNFHQYSVEGGKETLTPSELRDLVTQQLPHLMPSN).

The protein belongs to the S-100 family. As to quaternary structure, homodimer. Interacts with AGER.

It is found in the cytoplasm. Its function is as follows. Modulates P53/TP53 protein levels, and thereby plays a role in the regulation of cell survival and apoptosis. Depending on the context, it can promote cell proliferation or apoptosis. Plays a role in the regulation of cell migration by modulating the levels of MMP2, a matrix protease that is under transcriptional control of P53/TP53. Does not bind calcium. The polypeptide is Protein S100-A14 (S100A14) (Bos taurus (Bovine)).